We begin with the raw amino-acid sequence, 242 residues long: MSRLKAINGIMLRPIIWKRPSSNDAILQFIRQNQEISQSSVFQGTLYEHTVMRELSGKLSMNQLQKIGGSHDRGVDIRGQWPLDFVFGQVTKVVPLDAVPKRCKIHGTTLKPLRCKIEENDGKLDPLKALVQCKAFSGSKVSPREFRELVGTFASIVPDSQRNRSVILMCSPNLLTKEGLSLINTVKVPLIYLRIEMLQRIGDNYDVDNSGRLLNYYENDYAAALLQGCGIKEWLKLSLYRR.

The protein belongs to the RRG7 family.

Its subcellular location is the mitochondrion. The protein is Required for respiratory growth protein 7, mitochondrial (RRG7) of Zygosaccharomyces rouxii (strain ATCC 2623 / CBS 732 / NBRC 1130 / NCYC 568 / NRRL Y-229).